The following is an 887-amino-acid chain: ATP-dependent DNA helicase srs2 (887 aa).

In terms of domain architecture, UvrD-like helicase ATP-binding spans 9-304; sequence KFLNEEQRIS…LHLERNYRSA (296 aa). ATP-binding positions include 33–38 and R302; that span reads GSGKTR. Residues 305 to 597 form the UvrD-like helicase C-terminal domain; that stretch reads KPILELALSI…TISTLHAAKG (293 aa).

This sequence belongs to the helicase family. UvrD subfamily.

It is found in the nucleus. It carries out the reaction Couples ATP hydrolysis with the unwinding of duplex DNA by translocating in the 3'-5' direction.. It catalyses the reaction ATP + H2O = ADP + phosphate + H(+). Functionally, ATP-dependent DNA helicase involved in DNA repair at least for UV-induced lesions. Also aids the recombinational repair of camptothecin-induced collapsed replication forks. This chain is ATP-dependent DNA helicase srs2 (srs2), found in Schizosaccharomyces pombe (strain 972 / ATCC 24843) (Fission yeast).